Reading from the N-terminus, the 409-residue chain is MTTDVRVLRQDDWNLWYDTLIRAFGGVAEASEERELWQTLTECDRSIGVWDGDACVGTAGAFSFRVTVPGGASVPAAGITMVSVAATHRRRGVLTAMMRRQLDDIRSWGEPLAVLTASEPAIYGRFGYGIGTHQLTADVDTSRVRLSVPPGTDDVRLRYAVPADVLDVCEAVYARLVPGRPGMPARRPGWDRLMVLDPESRRDGASPLQCVVAERDGETVGYTRFRVKPDWEPSGPKGTVVLQDLEALDPAAHAALWRFLFDIDLTSHLNARNRPLDEAWLHLVSDIRRCNLRKRDSLHVRLVDVGAALEARTYQAPVDVVFEVEDAFCPWNEGRWRLTGDGKGATCVRTRDSVDLALSVRDLGAAYLGGVSLVSLGAAGRVRELRPGALTEATSAFSSAIAPWLPHGF.

An N-acetyltransferase domain is found at 3–162; that stretch reads TDVRVLRQDD…DDVRLRYAVP (160 aa). Residues 82 to 84, 90 to 95, and 118 to 119 each bind acetyl-CoA; these read VSV, RRGVLT, and SE. Tyrosine 123 (proton donor) is an active-site residue. The Proton acceptor; via carboxylate role is filled by phenylalanine 409.

This sequence belongs to the acetyltransferase Eis family. As to quaternary structure, homohexamer; trimer of dimers.

This is an uncharacterized protein from Streptomyces avermitilis (strain ATCC 31267 / DSM 46492 / JCM 5070 / NBRC 14893 / NCIMB 12804 / NRRL 8165 / MA-4680).